A 343-amino-acid polypeptide reads, in one-letter code: Anthranilate phosphoribosyltransferase (343 aa).

5-phospho-alpha-D-ribose 1-diphosphate contacts are provided by residues Gly-81, 84-85, 91-94, 109-117, and Ser-121; these read GD, NVST, and KHGNRSVSS. Gly-81 contacts anthranilate. Mg(2+) is bound at residue Ser-93. Position 112 (Asn-112) interacts with anthranilate. Anthranilate is bound at residue Arg-167. Mg(2+) is bound by residues Asp-226 and Glu-227.

Belongs to the anthranilate phosphoribosyltransferase family. As to quaternary structure, homodimer. Requires Mg(2+) as cofactor.

It catalyses the reaction N-(5-phospho-beta-D-ribosyl)anthranilate + diphosphate = 5-phospho-alpha-D-ribose 1-diphosphate + anthranilate. Its pathway is amino-acid biosynthesis; L-tryptophan biosynthesis; L-tryptophan from chorismate: step 2/5. Functionally, catalyzes the transfer of the phosphoribosyl group of 5-phosphorylribose-1-pyrophosphate (PRPP) to anthranilate to yield N-(5'-phosphoribosyl)-anthranilate (PRA). The protein is Anthranilate phosphoribosyltransferase of Chromohalobacter salexigens (strain ATCC BAA-138 / DSM 3043 / CIP 106854 / NCIMB 13768 / 1H11).